The following is a 154-amino-acid chain: Ribosome maturation factor RimP (154 aa).

This sequence belongs to the RimP family.

It localises to the cytoplasm. Functionally, required for maturation of 30S ribosomal subunits. The protein is Ribosome maturation factor RimP of Prochlorococcus marinus (strain MIT 9303).